The sequence spans 301 residues: Bifunctional dTDP-4-dehydrorhamnose 3,5-epimerase/dTDP-4-dehydrorhamnose reductase (301 aa).

NADPH contacts are provided by residues 23 to 24 (WI), 69 to 71 (GVT), and Tyr-111.

This sequence belongs to the dTDP-4-dehydrorhamnose reductase family. Expressed in roots, leaves, stems and flowers.

It catalyses the reaction dTDP-4-dehydro-6-deoxy-alpha-D-glucose = dTDP-4-dehydro-beta-L-rhamnose. The catalysed reaction is dTDP-beta-L-rhamnose + NADP(+) = dTDP-4-dehydro-beta-L-rhamnose + NADPH + H(+). Its pathway is carbohydrate biosynthesis; dTDP-L-rhamnose biosynthesis. Bifunctional enzyme involved in dTDP-beta-L-rhamnose biosynthesis. Catalyzes the epimerization of the C3' and C5'positions of dTDP-6-deoxy-4-keto-alpha-D-glucose to form dTDP-4-keto-beta-L-rhamnose and its reduction to yield dTDP-beta-L-rhamnose. Can form UDP-beta-L-rhamnose from UDP-6-deoxy-4-keto-alpha-D-glucose, but cannot convert GDP-4-dehydro-6-deoxy-D-mannose to GDP-fucose. In Arabidopsis thaliana (Mouse-ear cress), this protein is Bifunctional dTDP-4-dehydrorhamnose 3,5-epimerase/dTDP-4-dehydrorhamnose reductase.